An 873-amino-acid polypeptide reads, in one-letter code: MQTTDFNTKASSPKSTAEHTPLMKQFFAAKSDYPDLLLFFRMGDFYELFYDDARKAARLLDITLTQRGSSGGAPIPMAGVPVHAYEGYLARLVALGESVAICEQIGDPALAKGLVERKVVRIVTPGTVTDEALLDERRDTLLMAISRSKQGYGLAWADLAGGRFLVNEVDTVDALEAEIARLEPAELLVPDEDHWPEFLRGRIGVRRRPPWLFDADSGRRQLLAFFKLHDLSGFGIDDKPSATAAAGALLGYVEETQKQRLPHLTSIATEVASEAISMNAATRRHLELDTRVDGDTRNTLLGVLDSTVTPMGGRLLRRWLHRPLRLRDVLVQRHHAVGNLIDAGADADLREAFRALGDLERILTRVALRSARPRDFSTLRDGLALLPKVRTILAPLDSPRLQTLHAELGEHDATAHLLISAVAETPPLKLSDGGVIASGYDAELDELRRLSTNADQFLIDLEQRERASSGIATLKVGYNRVHGYYIEISKGQAEKAPLHYSRRQTLTNAERYITEELKTFEDKVLSARERSLSREKLLYEGLLDTLGTELEGLKRCAGALSELDVLAGFAERAQALDWSQPELDSAPCLRIERGRHPVVEAVRDHPFEPNDLDLHSDRRMLVITGPNMGGKSTYMRQNALIVLLAHIGSYVPASRAVIGPIDRILTRIGAGDDLARGQSTFMVEMAETSYILHHATPQSLVLMDEIGRGTSTYDGLALADAVARHLAHTNRCYTLFATHYFELTALADESHDGGASGIANVHLDAVEHGERLVFMHAVKDGPANRSFGLQVAALAGLPKAAVTQARRRLVELEQRGGESHSAQMAPTALDAPQQFGLFTAPSSAAQEALQALDPDELTPKQALEALYRLKALL.

Position 625–632 (625–632 (GPNMGGKS)) interacts with ATP.

The protein belongs to the DNA mismatch repair MutS family.

This protein is involved in the repair of mismatches in DNA. It is possible that it carries out the mismatch recognition step. This protein has a weak ATPase activity. This Xanthomonas oryzae pv. oryzae (strain KACC10331 / KXO85) protein is DNA mismatch repair protein MutS.